The following is a 500-amino-acid chain: tRNA nucleotidyltransferase cca1 (500 aa).

Positions 122 to 139 are flexible loop; that stretch reads DYTNSNSSNKLVFGTPLE. The ERhxxExxxhh motif motif lies at 231–241; sequence ERIGVEVDKML.

Belongs to the tRNA nucleotidyltransferase/poly(A) polymerase family.

It catalyses the reaction a tRNA precursor + 2 CTP = a tRNA with a 3' CC end + 2 diphosphate. In terms of biological role, tRNA nucleotidyltransferase involved in the synthesis of the tRNA CCA terminus. In contrast to what is usually observed in eukaryotes for which one enzyme synthesizes the whole tRNA CCA terminus, in S.pombe, cca1 specifically adds two cytidine residues to a tRNA substrate lacking this sequence while cca2 specifically adds the terminal adenosine residue thereby completing the CCA sequence. This is tRNA nucleotidyltransferase cca1 from Schizosaccharomyces pombe (strain 972 / ATCC 24843) (Fission yeast).